Reading from the N-terminus, the 327-residue chain is Interleukin-12 subunit beta (327 aa).

The first 22 residues, 1 to 22 (MHPQQLVVSWFSLVLLASPIVA), serve as a signal peptide directing secretion. Positions 23–106 (IWELEKNVYI…LSRSLLLLHK (84 aa)) constitute an Ig-like C2-type domain. Cys50 and Cys90 are joined by a disulfide. N-linked (GlcNAc...) asparagine glycosylation is present at Asn223. Positions 238 to 327 (PPKNLQLKPL…WSEWASVSCS (90 aa)) constitute a Fibronectin type-III domain.

Belongs to the IL-12B family. In terms of assembly, heterodimer with IL12A; disulfide-linked. The heterodimer is known as interleukin IL-12. Heterodimer with IL23A; disulfide-linked. The heterodimer is known as interleukin IL-23. Also secreted as a monomer. Interacts with NBR1; this interaction promotes IL-12 secretion.

Cytokine that can act as a growth factor for activated T and NK cells, enhance the lytic activity of NK/lymphokine-activated killer cells, and stimulate the production of IFN-gamma by resting PBMC. Functionally, associates with IL23A to form the IL-23 interleukin, a heterodimeric cytokine which functions in innate and adaptive immunity. IL-23 may constitute with IL-17 an acute response to infection in peripheral tissues. IL-23 binds to a heterodimeric receptor complex composed of IL12RB1 and IL23R, activates the Jak-Stat signaling cascade, stimulates memory rather than naive T-cells and promotes production of pro-inflammatory cytokines. IL-23 induces autoimmune inflammation and thus may be responsible for autoimmune inflammatory diseases and may be important for tumorigenesis. In Bubalus bubalis (Domestic water buffalo), this protein is Interleukin-12 subunit beta (IL12B).